The primary structure comprises 673 residues: UvrABC system protein C (673 aa).

Residues 16–95 (VEPGVYKFRD…IKEFDPRFNV (80 aa)) form the GIY-YIG domain. The 36-residue stretch at 208–243 (DKMVRELERRMHAAAEDLDFETAARLRDDVQALRRA) folds into the UVR domain. The disordered stretch occupies residues 488–526 (RDEAERDELDGTAAGAPLVDDDETPTSRPGIDPTTGRPR).

It belongs to the UvrC family. Interacts with UvrB in an incision complex.

The protein resides in the cytoplasm. In terms of biological role, the UvrABC repair system catalyzes the recognition and processing of DNA lesions. UvrC both incises the 5' and 3' sides of the lesion. The N-terminal half is responsible for the 3' incision and the C-terminal half is responsible for the 5' incision. In Nocardia farcinica (strain IFM 10152), this protein is UvrABC system protein C.